We begin with the raw amino-acid sequence, 539 residues long: CTP synthase (539 aa).

The amidoligase domain stretch occupies residues 1–268 (MSFKSIFLTG…SDFLLNKLGF (268 aa)). Serine 14 contacts CTP. A UTP-binding site is contributed by serine 14. 15–20 (SLGKGL) is an ATP binding site. Tyrosine 55 contributes to the L-glutamine binding site. Aspartate 72 is an ATP binding site. Residues aspartate 72 and glutamate 142 each coordinate Mg(2+). CTP-binding positions include 149–151 (DIE), 188–193 (KTKPTQ), and lysine 224. Residues 188–193 (KTKPTQ) and lysine 224 each bind UTP. Residues 294 to 532 (RIGLVGKYLE…IRAAKAYSLE (239 aa)) form the Glutamine amidotransferase type-1 domain. Glycine 353 contributes to the L-glutamine binding site. The active-site Nucleophile; for glutamine hydrolysis is the cysteine 380. L-glutamine contacts are provided by residues 381–384 (LGMQ), glutamate 404, and arginine 460. Catalysis depends on residues histidine 505 and glutamate 507.

The protein belongs to the CTP synthase family. Homotetramer.

It carries out the reaction UTP + L-glutamine + ATP + H2O = CTP + L-glutamate + ADP + phosphate + 2 H(+). It catalyses the reaction L-glutamine + H2O = L-glutamate + NH4(+). The enzyme catalyses UTP + NH4(+) + ATP = CTP + ADP + phosphate + 2 H(+). It participates in pyrimidine metabolism; CTP biosynthesis via de novo pathway; CTP from UDP: step 2/2. Allosterically activated by GTP, when glutamine is the substrate; GTP has no effect on the reaction when ammonia is the substrate. The allosteric effector GTP functions by stabilizing the protein conformation that binds the tetrahedral intermediate(s) formed during glutamine hydrolysis. Inhibited by the product CTP, via allosteric rather than competitive inhibition. Functionally, catalyzes the ATP-dependent amination of UTP to CTP with either L-glutamine or ammonia as the source of nitrogen. Regulates intracellular CTP levels through interactions with the four ribonucleotide triphosphates. This chain is CTP synthase, found in Chlamydia trachomatis serovar L2 (strain ATCC VR-902B / DSM 19102 / 434/Bu).